The following is a 217-amino-acid chain: Probable disulfide bond formation protein D (217 aa).

A signal peptide spans 1–28; it reads MKSSNKLMALGIVFSIAVLIVIGTIVYS. Residues C66 and C69 are joined by a disulfide bond.

This sequence belongs to the thioredoxin family. DsbA subfamily.

Functionally, may be required for disulfide bond formation in some proteins. The sequence is that of Probable disulfide bond formation protein D (bdbD) from Bacillus anthracis.